We begin with the raw amino-acid sequence, 906 residues long: Protein translocase subunit SecA (906 aa).

ATP is bound by residues Gln-90, 108–112 (GEGKT), and Asp-503. Residues 845 to 882 (TAAEAPASVPQPQAAVAPQPAPELVGADNGESQPQAWG) form a disordered region. Residues 846–862 (AAEAPASVPQPQAAVAP) show a composition bias toward low complexity. The Zn(2+) site is built by Cys-890, Cys-892, Cys-901, and His-902.

This sequence belongs to the SecA family. As to quaternary structure, monomer and homodimer. Part of the essential Sec protein translocation apparatus which comprises SecA, SecYEG and auxiliary proteins SecDF-YajC and YidC. Requires Zn(2+) as cofactor.

Its subcellular location is the cell inner membrane. It localises to the cytoplasm. The enzyme catalyses ATP + H2O + cellular proteinSide 1 = ADP + phosphate + cellular proteinSide 2.. Functionally, part of the Sec protein translocase complex. Interacts with the SecYEG preprotein conducting channel. Has a central role in coupling the hydrolysis of ATP to the transfer of proteins into and across the cell membrane, serving both as a receptor for the preprotein-SecB complex and as an ATP-driven molecular motor driving the stepwise translocation of polypeptide chains across the membrane. The protein is Protein translocase subunit SecA of Cereibacter sphaeroides (strain ATCC 17025 / ATH 2.4.3) (Rhodobacter sphaeroides).